We begin with the raw amino-acid sequence, 635 residues long: Cilia- and flagella-associated protein 206 (635 aa).

The protein belongs to the CFAP206 family.

Its subcellular location is the cytoplasm. It localises to the cytoskeleton. The protein localises to the cilium axoneme. May regulate cilium motility through its role in the assembly of the axonemal RS2 radial spoke. This Tetrahymena thermophila (strain SB210) protein is Cilia- and flagella-associated protein 206.